A 216-amino-acid chain; its full sequence is Cytidylate kinase (216 aa).

7 to 15 (GPSGTGKST) is a binding site for ATP.

Belongs to the cytidylate kinase family. Type 1 subfamily.

Its subcellular location is the cytoplasm. The enzyme catalyses CMP + ATP = CDP + ADP. The catalysed reaction is dCMP + ATP = dCDP + ADP. This chain is Cytidylate kinase, found in Chlamydia felis (strain Fe/C-56) (Chlamydophila felis).